Reading from the N-terminus, the 229-residue chain is Glucose-induced degradation protein 8-B homolog (229 aa).

The LisH domain occupies 26–58 (QRADMNRLIMNYLVTEGFKEAAEKFRMESGIEP). Residues 64-121 (SLDERIKIREMVLKGQIQEAIALINSLHPELLDTNRYLYFHLQQQHLIELIRLRETEA) enclose the CTLH domain.

As to quaternary structure, identified in the CTLH complex that contains at least MAEA, RMND5A (or alternatively its paralog RMND5B), GID8, WDR26, and RANBP9 and/or RANBP10. Interacts with CTNNB1.

The protein localises to the cytoplasm. It is found in the nucleus. Functionally, core component of the CTLH E3 ubiquitin-protein ligase complex that selectively accepts ubiquitin from UBE2H and mediates ubiquitination and subsequent proteasomal degradation of target proteins. Acts as a positive regulator of Wnt signaling pathway by promoting beta-catenin (CTNNB1) nuclear accumulation. Required for normal Wnt signaling and normal dorsoventral patterning during embryogenesis. The chain is Glucose-induced degradation protein 8-B homolog (gid8b) from Danio rerio (Zebrafish).